The primary structure comprises 253 residues: tRNA pseudouridine synthase A (253 aa).

The Nucleophile role is filled by Asp51. Tyr110 serves as a coordination point for substrate.

Belongs to the tRNA pseudouridine synthase TruA family. As to quaternary structure, homodimer.

The catalysed reaction is uridine(38/39/40) in tRNA = pseudouridine(38/39/40) in tRNA. Formation of pseudouridine at positions 38, 39 and 40 in the anticodon stem and loop of transfer RNAs. The protein is tRNA pseudouridine synthase A of Wolinella succinogenes (strain ATCC 29543 / DSM 1740 / CCUG 13145 / JCM 31913 / LMG 7466 / NCTC 11488 / FDC 602W) (Vibrio succinogenes).